A 231-amino-acid polypeptide reads, in one-letter code: NADH-ubiquinone oxidoreductase chain 4 (231 aa).

7 helical membrane passes run 1 to 21, 34 to 54, 63 to 85, 89 to 111, 128 to 148, 169 to 189, and 211 to 231; these read PIAG…YGII, VFLP…LTCL, IAYS…TPWG, AMAL…NTTY, MMPM…AIPP, TIIM…HMFL, and LLMT…ELVT.

It belongs to the complex I subunit 4 family.

It localises to the mitochondrion membrane. It catalyses the reaction a ubiquinone + NADH + 5 H(+)(in) = a ubiquinol + NAD(+) + 4 H(+)(out). Core subunit of the mitochondrial membrane respiratory chain NADH dehydrogenase (Complex I) that is believed to belong to the minimal assembly required for catalysis. Complex I functions in the transfer of electrons from NADH to the respiratory chain. The immediate electron acceptor for the enzyme is believed to be ubiquinone. This chain is NADH-ubiquinone oxidoreductase chain 4 (MT-ND4), found in Sistrurus miliarius (Pigmy rattlesnake).